Consider the following 307-residue polypeptide: 4-hydroxythreonine-4-phosphate dehydrogenase (307 aa).

2 residues coordinate substrate: H126 and T127. A divalent metal cation-binding residues include H156, H195, and H251. Positions 259, 268, and 277 each coordinate substrate.

It belongs to the PdxA family. As to quaternary structure, homodimer. Zn(2+) is required as a cofactor. It depends on Mg(2+) as a cofactor. Co(2+) serves as cofactor.

It localises to the cytoplasm. It carries out the reaction 4-(phosphooxy)-L-threonine + NAD(+) = 3-amino-2-oxopropyl phosphate + CO2 + NADH. It participates in cofactor biosynthesis; pyridoxine 5'-phosphate biosynthesis; pyridoxine 5'-phosphate from D-erythrose 4-phosphate: step 4/5. Its function is as follows. Catalyzes the NAD(P)-dependent oxidation of 4-(phosphooxy)-L-threonine (HTP) into 2-amino-3-oxo-4-(phosphooxy)butyric acid which spontaneously decarboxylates to form 3-amino-2-oxopropyl phosphate (AHAP). The chain is 4-hydroxythreonine-4-phosphate dehydrogenase from Helicobacter pylori (strain Shi470).